Reading from the N-terminus, the 206-residue chain is Outer-membrane lipoprotein carrier protein (206 aa).

Positions 1-23 (MKPLFPMLTAAAIAAGLAAPAQA) are cleaved as a signal peptide.

It belongs to the LolA family. Monomer.

It is found in the periplasm. Its function is as follows. Participates in the translocation of lipoproteins from the inner membrane to the outer membrane. Only forms a complex with a lipoprotein if the residue after the N-terminal Cys is not an aspartate (The Asp acts as a targeting signal to indicate that the lipoprotein should stay in the inner membrane). The sequence is that of Outer-membrane lipoprotein carrier protein from Chromobacterium violaceum (strain ATCC 12472 / DSM 30191 / JCM 1249 / CCUG 213 / NBRC 12614 / NCIMB 9131 / NCTC 9757 / MK).